A 505-amino-acid chain; its full sequence is Glutamyl-tRNA(Gln) amidotransferase subunit B, mitochondrial (505 aa).

Belongs to the GatB/GatE family. GatB subfamily. As to quaternary structure, subunit of the heterotrimeric GatCAB amidotransferase (AdT) complex, composed of A, B and C subunits.

The protein resides in the mitochondrion. It catalyses the reaction L-glutamyl-tRNA(Gln) + L-glutamine + ATP + H2O = L-glutaminyl-tRNA(Gln) + L-glutamate + ADP + phosphate + H(+). In terms of biological role, allows the formation of correctly charged Gln-tRNA(Gln) through the transamidation of misacylated Glu-tRNA(Gln) in the mitochondria. The reaction takes place in the presence of glutamine and ATP through an activated gamma-phospho-Glu-tRNA(Gln). This chain is Glutamyl-tRNA(Gln) amidotransferase subunit B, mitochondrial, found in Schizosaccharomyces japonicus (strain yFS275 / FY16936) (Fission yeast).